A 375-amino-acid polypeptide reads, in one-letter code: Alcohol dehydrogenase 1A (375 aa).

Ser-2 carries the N-acetylserine modification. Residue Ser-23 is modified to Phosphoserine. Residue Tyr-35 is modified to Phosphotyrosine. Cys-47 provides a ligand contact to Zn(2+). An NAD(+)-binding site is contributed by 48–52 (GTDDH). Zn(2+)-binding residues include His-68, Cys-98, Cys-101, Cys-104, Cys-112, and Cys-175. NAD(+) is bound by residues 200-205 (GLGGVG), Asp-224, Lys-229, Ile-270, 293-295 (VGV), 318-320 (AVY), and Arg-370.

It belongs to the zinc-containing alcohol dehydrogenase family. As to quaternary structure, dimer of identical or heterodimer of closely related subunits alpha, beta, or gamma that are encoded by genes ADH1A, ADH1B, and ADH1C, respectively. The cofactor is Zn(2+).

It is found in the cytoplasm. It catalyses the reaction a primary alcohol + NAD(+) = an aldehyde + NADH + H(+). It carries out the reaction a secondary alcohol + NAD(+) = a ketone + NADH + H(+). The catalysed reaction is butan-1-ol + NAD(+) = butanal + NADH + H(+). The enzyme catalyses 1-propanol + NAD(+) = propanal + NADH + H(+). It catalyses the reaction propan-2-ol + NAD(+) = acetone + NADH + H(+). In terms of biological role, alcohol dehydrogenase. Oxidizes primary as well as secondary alcohols. Ethanol is a very poor substrate. The sequence is that of Alcohol dehydrogenase 1A (ADH1A) from Macaca mulatta (Rhesus macaque).